The primary structure comprises 449 residues: MEFRYLPMTNQDKQEMLDAIGIKSTEELFSDIPEHVRFKGEMNLKAPISEYELTKELTELASRNIHTKEYTSFLGAGVYDHYIPSVVDHVISRSEFYTAYTPYQPEISQGELQAIFEFQTMISELTGLPVANSSMYDGGTALAEAVNLSAAHTKRKKVLVSKAVHPEYRAVIDSYTRGQSIDIVEIDTVNGVTDLAQLDQAIDETIAGVVVQYPNFFGQLEPMKKIEQLLENHQKTMLIVSSNPLALGYLTPPGEFGADIVTGDTQVFGIPAQFGGPHCGYFATSKKLMRKVPGRLVGETVDEEGTRGYVLTLQAREQHIRRDKATSNICSNQALNALASSVAMSSIGKHGLRKLASVNMQKARYARKKLLEAGVELAFDGSFFNEFVIKVPGSVSKINKQLLDKGIIAGYDLAKDDKSLEGYMLIAVTEVRTKQEIDQFVKELGDIHV.

It belongs to the GcvP family. N-terminal subunit subfamily. The glycine cleavage system is composed of four proteins: P, T, L and H. In this organism, the P 'protein' is a heterodimer of two subunits.

The enzyme catalyses N(6)-[(R)-lipoyl]-L-lysyl-[glycine-cleavage complex H protein] + glycine + H(+) = N(6)-[(R)-S(8)-aminomethyldihydrolipoyl]-L-lysyl-[glycine-cleavage complex H protein] + CO2. Its function is as follows. The glycine cleavage system catalyzes the degradation of glycine. The P protein binds the alpha-amino group of glycine through its pyridoxal phosphate cofactor; CO(2) is released and the remaining methylamine moiety is then transferred to the lipoamide cofactor of the H protein. The polypeptide is Probable glycine dehydrogenase (decarboxylating) subunit 1 (Oceanobacillus iheyensis (strain DSM 14371 / CIP 107618 / JCM 11309 / KCTC 3954 / HTE831)).